Reading from the N-terminus, the 693-residue chain is Polyribonucleotide nucleotidyltransferase (693 aa).

Residues D489 and D495 each coordinate Mg(2+). In terms of domain architecture, KH spans 556–615; the sequence is PQIHVMNINPAKIKDVVGRGGATVKGIVEKTGAQIDTSDSGEVKVFAKDKKSMDMAVAMI. The S1 motif domain occupies 625 to 693; it reads GQVYKGKIVK…GRVKLSLVAR (69 aa).

It belongs to the polyribonucleotide nucleotidyltransferase family. In terms of assembly, component of the RNA degradosome, which is a multiprotein complex involved in RNA processing and mRNA degradation. Mg(2+) is required as a cofactor.

The protein localises to the cytoplasm. It catalyses the reaction RNA(n+1) + phosphate = RNA(n) + a ribonucleoside 5'-diphosphate. Involved in mRNA degradation. Catalyzes the phosphorolysis of single-stranded polyribonucleotides processively in the 3'- to 5'-direction. The sequence is that of Polyribonucleotide nucleotidyltransferase from Francisella tularensis subsp. tularensis (strain WY96-3418).